The sequence spans 189 residues: Thymidine kinase (189 aa).

Residues 9-16 (GTMNSGKT) and 85-88 (DECQ) each bind ATP. Residue Glu-86 is the Proton acceptor of the active site. Positions 143, 146, 180, and 183 each coordinate Zn(2+).

Belongs to the thymidine kinase family. In terms of assembly, homotetramer.

The protein localises to the cytoplasm. It catalyses the reaction thymidine + ATP = dTMP + ADP + H(+). The polypeptide is Thymidine kinase (Streptococcus agalactiae serotype Ia (strain ATCC 27591 / A909 / CDC SS700)).